We begin with the raw amino-acid sequence, 56 residues long: Large ribosomal subunit protein bL33 (56 aa).

Belongs to the bacterial ribosomal protein bL33 family.

This is Large ribosomal subunit protein bL33 from Acidovorax sp. (strain JS42).